Consider the following 155-residue polypeptide: Small ribosomal subunit protein uS7 (155 aa).

Belongs to the universal ribosomal protein uS7 family. Part of the 30S ribosomal subunit. Contacts proteins S9 and S11.

In terms of biological role, one of the primary rRNA binding proteins, it binds directly to 16S rRNA where it nucleates assembly of the head domain of the 30S subunit. Is located at the subunit interface close to the decoding center, probably blocks exit of the E-site tRNA. This is Small ribosomal subunit protein uS7 from Mycoplasma mycoides subsp. mycoides SC (strain CCUG 32753 / NCTC 10114 / PG1).